The sequence spans 107 residues: uncharacterized protein (107 aa).

A helical membrane pass occupies residues leucine 62–alanine 79.

It localises to the nucleus membrane. This is an uncharacterized protein from Schizosaccharomyces pombe (strain 972 / ATCC 24843) (Fission yeast).